The following is a 622-amino-acid chain: Cilia- and flagella-associated protein 206 (622 aa).

The interval 571–592 (QVYPPKDTSTQSMREDSTGVPR) is disordered.

It belongs to the CFAP206 family.

It localises to the cytoplasm. The protein localises to the cytoskeleton. Its subcellular location is the cilium axoneme. It is found in the cilium basal body. In terms of biological role, essential for sperm motility and is involved in the regulation of the beating frequency of motile cilia on the epithelial cells of the respiratory tract. Required for the establishment of radial spokes in sperm flagella. In Macaca fascicularis (Crab-eating macaque), this protein is Cilia- and flagella-associated protein 206.